A 276-amino-acid polypeptide reads, in one-letter code: Putative translation initiation factor eIF-2B subunit 2-like (276 aa).

Belongs to the eIF-2B alpha/beta/delta subunits family. As to quaternary structure, complex of two different subunits.

In terms of biological role, catalyzes the exchange of initiation factor 2-bound GDP for GTP. This is Putative translation initiation factor eIF-2B subunit 2-like from Pyrococcus abyssi (strain GE5 / Orsay).